The chain runs to 261 residues: General secretion pathway protein N (261 aa).

Residues 1–10 (MRLEMIGLRT) are Cytoplasmic-facing. Residues 11-31 (WLLATVVGWALLVCVLAVAGL) traverse the membrane as a helical segment. The Periplasmic portion of the chain corresponds to 32-261 (GKRVELLPDD…QGGSTPGQTQ (230 aa)). The disordered stretch occupies residues 158–261 (VFNGQGGQPP…QGGSTPGQTQ (104 aa)). A compositionally biased stretch (pro residues) spans 179 to 200 (AVPPLPPNVPPAPATPAPPPAE). The span at 201–211 (VPQQQPGGQAP) shows a compositional bias: low complexity. Residues 227–244 (RPSDEQMRAIRERIEARR) are compositionally biased toward basic and acidic residues.

In terms of assembly, binds to XpsD.

The protein localises to the cell inner membrane. Functionally, involved in a general secretion pathway (GSP) for the export of proteins. This is General secretion pathway protein N (xpsN) from Xanthomonas campestris pv. campestris (strain ATCC 33913 / DSM 3586 / NCPPB 528 / LMG 568 / P 25).